Here is a 314-residue protein sequence, read N- to C-terminus: Ribosomal protein uL3 glutamine methyltransferase (314 aa).

It belongs to the protein N5-glutamine methyltransferase family. PrmB subfamily.

It carries out the reaction L-glutaminyl-[ribosomal protein uL3] + S-adenosyl-L-methionine = N(5)-methyl-L-glutaminyl-[ribosomal protein uL3] + S-adenosyl-L-homocysteine + H(+). In terms of biological role, methylates large ribosomal subunit protein uL3 on a specific glutamine residue. This Shewanella oneidensis (strain ATCC 700550 / JCM 31522 / CIP 106686 / LMG 19005 / NCIMB 14063 / MR-1) protein is Ribosomal protein uL3 glutamine methyltransferase.